The primary structure comprises 268 residues: Thiazole synthase (268 aa).

Lysine 100 serves as the catalytic Schiff-base intermediate with DXP. 1-deoxy-D-xylulose 5-phosphate contacts are provided by residues glycine 161, alanine 187 to glycine 188, and asparagine 209 to threonine 210. Positions alanine 248–serine 268 are disordered. The segment covering threonine 259 to serine 268 has biased composition (polar residues).

The protein belongs to the ThiG family. Homotetramer. Forms heterodimers with either ThiH or ThiS.

The protein localises to the cytoplasm. It catalyses the reaction [ThiS sulfur-carrier protein]-C-terminal-Gly-aminoethanethioate + 2-iminoacetate + 1-deoxy-D-xylulose 5-phosphate = [ThiS sulfur-carrier protein]-C-terminal Gly-Gly + 2-[(2R,5Z)-2-carboxy-4-methylthiazol-5(2H)-ylidene]ethyl phosphate + 2 H2O + H(+). Its pathway is cofactor biosynthesis; thiamine diphosphate biosynthesis. Its function is as follows. Catalyzes the rearrangement of 1-deoxy-D-xylulose 5-phosphate (DXP) to produce the thiazole phosphate moiety of thiamine. Sulfur is provided by the thiocarboxylate moiety of the carrier protein ThiS. In vitro, sulfur can be provided by H(2)S. In Nitrosomonas europaea (strain ATCC 19718 / CIP 103999 / KCTC 2705 / NBRC 14298), this protein is Thiazole synthase.